The chain runs to 363 residues: 3-isopropylmalate dehydrogenase (363 aa).

78–91 (GPKWEHLPPAEQPE) provides a ligand contact to NAD(+). 4 residues coordinate substrate: Arg-99, Arg-109, Arg-138, and Asp-227. Mg(2+) contacts are provided by Asp-227, Asp-251, and Asp-255. 285–297 (GSAPDIAGKGIAN) contacts NAD(+).

Belongs to the isocitrate and isopropylmalate dehydrogenases family. LeuB type 1 subfamily. Homodimer. The cofactor is Mg(2+). Requires Mn(2+) as cofactor.

The protein localises to the cytoplasm. The enzyme catalyses (2R,3S)-3-isopropylmalate + NAD(+) = 4-methyl-2-oxopentanoate + CO2 + NADH. Its pathway is amino-acid biosynthesis; L-leucine biosynthesis; L-leucine from 3-methyl-2-oxobutanoate: step 3/4. Functionally, catalyzes the oxidation of 3-carboxy-2-hydroxy-4-methylpentanoate (3-isopropylmalate) to 3-carboxy-4-methyl-2-oxopentanoate. The product decarboxylates to 4-methyl-2 oxopentanoate. The sequence is that of 3-isopropylmalate dehydrogenase from Photorhabdus laumondii subsp. laumondii (strain DSM 15139 / CIP 105565 / TT01) (Photorhabdus luminescens subsp. laumondii).